The following is a 644-amino-acid chain: Chaperone protein DnaK (644 aa).

Disordered regions lie at residues 490–533 and 570–644; these read QEEA…ELDD and EELQ…EDDA. Positions 492 to 513 are enriched in basic and acidic residues; the sequence is EAEKHKEEDEARRERIEARNEA. Acidic residues predominate over residues 523-533; the sequence is LLEENEEELDD. Gly residues predominate over residues 588–622; it reads GPGGAGGAAGAGPGGMGGMGGAAGPGGAGGAGPGG. A compositionally biased stretch (acidic residues) spans 624-644; sequence DADDEEYVDADFEDVDDEDDA.

This sequence belongs to the heat shock protein 70 family.

Functionally, acts as a chaperone. This Halorubrum lacusprofundi (strain ATCC 49239 / DSM 5036 / JCM 8891 / ACAM 34) protein is Chaperone protein DnaK.